The primary structure comprises 243 residues: UPF0246 protein Spy49_1742 (243 aa).

The protein belongs to the UPF0246 family.

This Streptococcus pyogenes serotype M49 (strain NZ131) protein is UPF0246 protein Spy49_1742.